The primary structure comprises 295 residues: UDP-N-acetylenolpyruvoylglucosamine reductase (295 aa).

The FAD-binding PCMH-type domain maps to 23-188 (KVGGPADFLA…ISAKFALKPG (166 aa)). R167 is a catalytic residue. Catalysis depends on S217, which acts as the Proton donor. E287 is a catalytic residue.

This sequence belongs to the MurB family. FAD is required as a cofactor.

Its subcellular location is the cytoplasm. The enzyme catalyses UDP-N-acetyl-alpha-D-muramate + NADP(+) = UDP-N-acetyl-3-O-(1-carboxyvinyl)-alpha-D-glucosamine + NADPH + H(+). The protein operates within cell wall biogenesis; peptidoglycan biosynthesis. Cell wall formation. The polypeptide is UDP-N-acetylenolpyruvoylglucosamine reductase (Streptococcus pyogenes serotype M18 (strain MGAS8232)).